A 188-amino-acid polypeptide reads, in one-letter code: Acireductone dioxygenase (188 aa).

4 residues coordinate Fe(2+): H97, H99, E103, and H141. Ni(2+) contacts are provided by H97, H99, E103, and H141.

Belongs to the acireductone dioxygenase (ARD) family. In terms of assembly, monomer. It depends on Fe(2+) as a cofactor. Ni(2+) is required as a cofactor.

It carries out the reaction 1,2-dihydroxy-5-(methylsulfanyl)pent-1-en-3-one + O2 = 3-(methylsulfanyl)propanoate + CO + formate + 2 H(+). The catalysed reaction is 1,2-dihydroxy-5-(methylsulfanyl)pent-1-en-3-one + O2 = 4-methylsulfanyl-2-oxobutanoate + formate + 2 H(+). It participates in amino-acid biosynthesis; L-methionine biosynthesis via salvage pathway; L-methionine from S-methyl-5-thio-alpha-D-ribose 1-phosphate: step 5/6. In terms of biological role, catalyzes 2 different reactions between oxygen and the acireductone 1,2-dihydroxy-3-keto-5-methylthiopentene (DHK-MTPene) depending upon the metal bound in the active site. Fe-containing acireductone dioxygenase (Fe-ARD) produces formate and 2-keto-4-methylthiobutyrate (KMTB), the alpha-ketoacid precursor of methionine in the methionine recycle pathway. Ni-containing acireductone dioxygenase (Ni-ARD) produces methylthiopropionate, carbon monoxide and formate, and does not lie on the methionine recycle pathway. This Xylella fastidiosa (strain M12) protein is Acireductone dioxygenase.